The sequence spans 202 residues: MPIGVPKVPFRSPGEEDAIWVDVYNRLHRERLLFLGQEVDSEISNQLIGLMVYLSIEDDTRDLYLFINSPGGWVIPGIAIYDTMQFVPPDVHTICMGLAASMGSFILVGGEITKRLAFPHARVMIHQPASSFYEAQTGEFILEAEELLKLRETLTRVYVQRTGNPLWVVSEDMERDVFMSATEAQAHGIVDLVAVENSGDFT.

The Nucleophile role is filled by Ser101. His126 is a catalytic residue.

The protein belongs to the peptidase S14 family. As to quaternary structure, component of the chloroplastic Clp protease core complex.

It is found in the plastid. The protein localises to the chloroplast stroma. It catalyses the reaction Hydrolysis of proteins to small peptides in the presence of ATP and magnesium. alpha-casein is the usual test substrate. In the absence of ATP, only oligopeptides shorter than five residues are hydrolyzed (such as succinyl-Leu-Tyr-|-NHMec, and Leu-Tyr-Leu-|-Tyr-Trp, in which cleavage of the -Tyr-|-Leu- and -Tyr-|-Trp bonds also occurs).. In terms of biological role, cleaves peptides in various proteins in a process that requires ATP hydrolysis. Has a chymotrypsin-like activity. Plays a major role in the degradation of misfolded proteins. The protein is ATP-dependent Clp protease proteolytic subunit of Platanus occidentalis (Sycamore).